A 396-amino-acid polypeptide reads, in one-letter code: S-adenosylmethionine synthase (396 aa).

His-16 serves as a coordination point for ATP. Asp-18 serves as a coordination point for Mg(2+). Residue Glu-44 participates in K(+) binding. 2 residues coordinate L-methionine: Glu-57 and Gln-100. A flexible loop region spans residues 100 to 110 (QSVDIAQGVDR). ATP contacts are provided by residues 165–167 (DAK), Asp-240, 246–247 (RK), Ala-263, and Lys-267. Asp-240 contributes to the L-methionine binding site. L-methionine is bound at residue Lys-271.

The protein belongs to the AdoMet synthase family. As to quaternary structure, homotetramer; dimer of dimers. The cofactor is Mg(2+). It depends on K(+) as a cofactor.

It is found in the cytoplasm. It catalyses the reaction L-methionine + ATP + H2O = S-adenosyl-L-methionine + phosphate + diphosphate. It participates in amino-acid biosynthesis; S-adenosyl-L-methionine biosynthesis; S-adenosyl-L-methionine from L-methionine: step 1/1. Its function is as follows. Catalyzes the formation of S-adenosylmethionine (AdoMet) from methionine and ATP. The overall synthetic reaction is composed of two sequential steps, AdoMet formation and the subsequent tripolyphosphate hydrolysis which occurs prior to release of AdoMet from the enzyme. In Pseudomonas syringae pv. tomato (strain ATCC BAA-871 / DC3000), this protein is S-adenosylmethionine synthase.